Consider the following 213-residue polypeptide: MPRYYCDYCDTYLTHDSPSVRKQHNAGYKHKANVRSYYQQFEEQQTQSLIDQRIKEHLGQTAAFQQVGAAYNQHLVSFPGNPPRPRLPVLPTPGMPVAGSAPLPMNSPLVPGMRPPVLPRPVPGAPGYMPAPGMPSMMAPPGAPSMPMPPLNSLPRPPTMNVPPAVPGSTSTPTSGGAPSMMTQPMYQANPAGPTSGGFDSFNINAQGPEANH.

Residues 4–36 form a Matrin-type zinc finger; that stretch reads YYCDYCDTYLTHDSPSVRKQHNAGYKHKANVRS. The segment covering 143 to 166 has biased composition (pro residues); the sequence is APSMPMPPLNSLPRPPTMNVPPAV. Positions 143-213 are disordered; sequence APSMPMPPLN…INAQGPEANH (71 aa). Residues 167 to 180 show a composition bias toward low complexity; sequence PGSTSTPTSGGAPS.

Belongs to the U1 small nuclear ribonucleoprotein C family. In terms of assembly, U1 snRNP is composed of the 7 core Sm proteins B/B', D1, D2, D3, E, F and G that assemble in a heptameric protein ring on the Sm site of the small nuclear RNA to form the core snRNP, and at least 3 U1 snRNP-specific proteins U1-70K, U1-A and U1-C. U1-C interacts with U1 snRNA and the 5' splice-site region of the pre-mRNA.

The protein localises to the nucleus. Its function is as follows. Component of the spliceosomal U1 snRNP, which is essential for recognition of the pre-mRNA 5' splice-site and the subsequent assembly of the spliceosome. U1-C is directly involved in initial 5' splice-site recognition for both constitutive and regulated alternative splicing. The interaction with the 5' splice-site seems to precede base-pairing between the pre-mRNA and the U1 snRNA. Stimulates commitment or early (E) complex formation by stabilizing the base pairing of the 5' end of the U1 snRNA and the 5' splice-site region. The sequence is that of U1 small nuclear ribonucleoprotein C from Vitis vinifera (Grape).